The primary structure comprises 298 residues: uncharacterized protein (298 aa).

This is an uncharacterized protein from Methanocaldococcus jannaschii (strain ATCC 43067 / DSM 2661 / JAL-1 / JCM 10045 / NBRC 100440) (Methanococcus jannaschii).